The primary structure comprises 413 residues: D-nopaline dehydrogenase (413 aa).

The protein belongs to the lysopine/nopaline/octopine/opine/vitopine dehydrogenases family. In terms of assembly, homotetramer.

It carries out the reaction D-nopaline + NADP(+) + H2O = L-arginine + 2-oxoglutarate + NADPH + H(+). This Agrobacterium tumefaciens (strain T37) protein is D-nopaline dehydrogenase (nos).